Reading from the N-terminus, the 445-residue chain is Exodeoxyribonuclease 7 large subunit (445 aa).

It belongs to the XseA family. Heterooligomer composed of large and small subunits.

It is found in the cytoplasm. The catalysed reaction is Exonucleolytic cleavage in either 5'- to 3'- or 3'- to 5'-direction to yield nucleoside 5'-phosphates.. In terms of biological role, bidirectionally degrades single-stranded DNA into large acid-insoluble oligonucleotides, which are then degraded further into small acid-soluble oligonucleotides. This is Exodeoxyribonuclease 7 large subunit from Limosilactobacillus reuteri (strain DSM 20016) (Lactobacillus reuteri).